An 87-amino-acid chain; its full sequence is Large ribosomal subunit protein bL27 (87 aa).

It belongs to the bacterial ribosomal protein bL27 family.

In Wigglesworthia glossinidia brevipalpis, this protein is Large ribosomal subunit protein bL27.